Reading from the N-terminus, the 83-residue chain is Weak toxin DE-1 homolog 1 (83 aa).

Positions 1-21 are cleaved as a signal peptide; the sequence is MKPVLLTLVVVTIVCLDLGYT. 4 disulfides stabilise this stretch: Cys24–Cys45, Cys38–Cys62, Cys64–Cys75, and Cys76–Cys81.

It belongs to the three-finger toxin family. Short-chain subfamily. Type I alpha-neurotoxin sub-subfamily. Expressed by the venom gland.

It is found in the secreted. Binds to muscle nicotinic acetylcholine receptor (nAChR) and inhibit acetylcholine from binding to the receptor, thereby impairing neuromuscular transmission. The chain is Weak toxin DE-1 homolog 1 from Ophiophagus hannah (King cobra).